The chain runs to 177 residues: Large ribosomal subunit protein uL6 (177 aa).

The protein belongs to the universal ribosomal protein uL6 family. Part of the 50S ribosomal subunit.

Its function is as follows. This protein binds to the 23S rRNA, and is important in its secondary structure. It is located near the subunit interface in the base of the L7/L12 stalk, and near the tRNA binding site of the peptidyltransferase center. The polypeptide is Large ribosomal subunit protein uL6 (Herminiimonas arsenicoxydans).